The following is a 137-amino-acid chain: SMR2 protein (137 aa).

Residues 1–18 (MLVVLLTAALLALSSAQN) form the signal peptide. Residues 14 to 113 (SSAQNTDEEV…LHHRENLRPQ (100 aa)) form a disordered region. A compositionally biased stretch (low complexity) spans 75-85 (QQQQPLPVENQ). The span at 99–110 (PPPETLHHRENL) shows a compositional bias: basic and acidic residues.

The protein localises to the secreted. Functionally, unknown, male-specific function. This Rattus norvegicus (Rat) protein is SMR2 protein (Smr2).